Reading from the N-terminus, the 243-residue chain is MADKILTPESQLKKSKAQQKSAEQVAAERAARKAANKEKRAAILERNAAYHKEYETAERAVIQAKREAKANGSYYVESQPKLVFVIRIKGINKIAPKPRKVLQLLRLNQINSGVFVKVTKATTELLRLVEPYVAYGYPSYSTIRQLVYKRGYGKINKQRIALSENSIVEANLGKYGIISVDDLIHEIITVGPHFKQANNFLWPFKLSNPSGGWGVPRKFKHFIQGGAFGNREEFINKLVKSMN.

Positions 1-31 (MADKILTPESQLKKSKAQQKSAEQVAAERAA) are disordered. The span at 18-28 (QQKSAEQVAAE) shows a compositional bias: low complexity.

This sequence belongs to the universal ribosomal protein uL30 family.

The chain is Large ribosomal subunit protein uL30 (RPL7) from Eremothecium gossypii (strain ATCC 10895 / CBS 109.51 / FGSC 9923 / NRRL Y-1056) (Yeast).